Here is a 591-residue protein sequence, read N- to C-terminus: MKTGKIIKVSGPLVVAEGMDEANVYDVVKVGEKGLIGEIIEMRGDKASIQVYEETSGIGPGDPVITTGEPLSVELGPGLIESMFDGIQRPLDAFMKAANSAFLSKGVEVKSLNREKKWPFVPTAKVGDKVSAGDVIGTVQETAVVLHRIMVPFGVEGTIKEIKAGDFNVEEVIAVVETEKGDKNLTLMQKWPVRKGRPYARKLNPVEPMTTGQRVIDTFFPVAKGGAAAVPGPFGAGKTVVQHQVAKWGDTEIVVYVGCGERGNEMTDVLNEFPELKDPKTGESLMKRTVLIANTSNMPVAAREASIYTGITIAEYFRDMGYSVSIMADSTSRWAEALREMSGRLEEMPGDEGYPAYLGSRLADYYERAGKVVALGKDGREGAVTAIGAVSPPGGDISEPVTQSTLRIVKVFWGLDAQLAYKRHFPSINWLTSYSLYLEKMGEWMDAHVADDWSALRTEAMALLQEEANLEEIVRLVGMDALSEGDRLKLEVAKSIREDYLQQNAFHENDTYTSLNKQYKMLNLILSFRHEAEKALEAGVYLDKVLKLPVRDRIARSKYISEEEISKMDDILVELKSEMNKLISEGGVLNA.

Residue 232 to 239 (GPFGAGKT) coordinates ATP.

Belongs to the ATPase alpha/beta chains family.

The catalysed reaction is ATP + H2O + 4 H(+)(in) = ADP + phosphate + 5 H(+)(out). Its function is as follows. Produces ATP from ADP in the presence of a proton gradient across the membrane. The V-type alpha chain is a catalytic subunit. The chain is V-type ATP synthase alpha chain from Clostridium perfringens (strain SM101 / Type A).